We begin with the raw amino-acid sequence, 424 residues long: Riboflavin biosynthesis protein RibBA (424 aa).

Positions 1–206 are DHBP synthase; it reads MFTCEAGIAS…VDDLITYRYT (206 aa). D-ribulose 5-phosphate is bound by residues 32-33, aspartate 37, 145-149, and glutamate 169; these read RE and RPGHT. Glutamate 33 lines the Mg(2+) pocket. Histidine 148 lines the Mg(2+) pocket. Residues 207 to 424 are GTP cyclohydrolase II; sequence YDSLVTKISS…YETVERMSCR (218 aa). Residue 257 to 261 participates in GTP binding; sequence RVHSE. Residues cysteine 262, cysteine 273, and cysteine 275 each contribute to the Zn(2+) site. GTP contacts are provided by residues glutamine 278, 301 to 303, and threonine 323; that span reads EGR. The Proton acceptor; for GTP cyclohydrolase activity role is filled by aspartate 335. Arginine 337 acts as the Nucleophile; for GTP cyclohydrolase activity in catalysis. GTP contacts are provided by threonine 358 and lysine 363.

It in the N-terminal section; belongs to the DHBP synthase family. The protein in the C-terminal section; belongs to the GTP cyclohydrolase II family. The cofactor is Mg(2+). Mn(2+) is required as a cofactor. Zn(2+) serves as cofactor.

The catalysed reaction is D-ribulose 5-phosphate = (2S)-2-hydroxy-3-oxobutyl phosphate + formate + H(+). The enzyme catalyses GTP + 4 H2O = 2,5-diamino-6-hydroxy-4-(5-phosphoribosylamino)-pyrimidine + formate + 2 phosphate + 3 H(+). It functions in the pathway cofactor biosynthesis; riboflavin biosynthesis; 2-hydroxy-3-oxobutyl phosphate from D-ribulose 5-phosphate: step 1/1. It participates in cofactor biosynthesis; riboflavin biosynthesis; 5-amino-6-(D-ribitylamino)uracil from GTP: step 1/4. Catalyzes the conversion of D-ribulose 5-phosphate to formate and 3,4-dihydroxy-2-butanone 4-phosphate. Its function is as follows. Catalyzes the conversion of GTP to 2,5-diamino-6-ribosylamino-4(3H)-pyrimidinone 5'-phosphate (DARP), formate and pyrophosphate. The protein is Riboflavin biosynthesis protein RibBA of Chlamydia trachomatis serovar D (strain ATCC VR-885 / DSM 19411 / UW-3/Cx).